Reading from the N-terminus, the 350-residue chain is MTVSPVALRRKTECKPHPTARYWKKCDVEALFGLPFLDLIYQAAEIHRQNFNPREIQLSTLLSIKTGGCPEDCAYCPQSAHHNTNLGKEQMMDVDEIVEKAKIAKSRGASRFCMGAAWRGPKPKDVETVSAIIKAVKGLGMETCGTFGMLEEGMAEDLKEAGLDYYNHNLDTDPDRYNDIIHTRQHEDRMDTLGKVRNAGLKVCCGGIVGMNETRAERAGLIASLANLDPQPESVPINRLVKVEGTPLADAEDLDWTEFVRTIAVARITMPQSYVRLSAGRSNMPEAMQAMCFMAGANSIFYGDKLLTTGNPDEDGDRILMEKLNLYPLQFEPEGEVAEVEKASGIKVDY.

In terms of domain architecture, Radical SAM core spans 54 to 278 (REIQLSTLLS…TMPQSYVRLS (225 aa)). Positions 69, 73, and 76 each coordinate [4Fe-4S] cluster. Residues Cys-113, Cys-144, Cys-204, and Arg-276 each contribute to the [2Fe-2S] cluster site.

Belongs to the radical SAM superfamily. Biotin synthase family. In terms of assembly, homodimer. The cofactor is [4Fe-4S] cluster. [2Fe-2S] cluster serves as cofactor.

The enzyme catalyses (4R,5S)-dethiobiotin + (sulfur carrier)-SH + 2 reduced [2Fe-2S]-[ferredoxin] + 2 S-adenosyl-L-methionine = (sulfur carrier)-H + biotin + 2 5'-deoxyadenosine + 2 L-methionine + 2 oxidized [2Fe-2S]-[ferredoxin]. Its pathway is cofactor biosynthesis; biotin biosynthesis; biotin from 7,8-diaminononanoate: step 2/2. Catalyzes the conversion of dethiobiotin (DTB) to biotin by the insertion of a sulfur atom into dethiobiotin via a radical-based mechanism. This Neisseria meningitidis serogroup B (strain ATCC BAA-335 / MC58) protein is Biotin synthase.